The sequence spans 370 residues: Dual-specificity RNA methyltransferase RlmN (370 aa).

The active-site Proton acceptor is the Glu-93. Residues 99–337 (EEGRGTLCVS…VTTVRKTRGD (239 aa)) form the Radical SAM core domain. Residues Cys-106 and Cys-343 are joined by a disulfide bond. Positions 113, 117, and 120 each coordinate [4Fe-4S] cluster. S-adenosyl-L-methionine-binding positions include 167–168 (GE), Ser-199, 221–223 (SLH), and Asn-300. Catalysis depends on Cys-343, which acts as the S-methylcysteine intermediate.

The protein belongs to the radical SAM superfamily. RlmN family. [4Fe-4S] cluster serves as cofactor.

Its subcellular location is the cytoplasm. It catalyses the reaction adenosine(2503) in 23S rRNA + 2 reduced [2Fe-2S]-[ferredoxin] + 2 S-adenosyl-L-methionine = 2-methyladenosine(2503) in 23S rRNA + 5'-deoxyadenosine + L-methionine + 2 oxidized [2Fe-2S]-[ferredoxin] + S-adenosyl-L-homocysteine. The catalysed reaction is adenosine(37) in tRNA + 2 reduced [2Fe-2S]-[ferredoxin] + 2 S-adenosyl-L-methionine = 2-methyladenosine(37) in tRNA + 5'-deoxyadenosine + L-methionine + 2 oxidized [2Fe-2S]-[ferredoxin] + S-adenosyl-L-homocysteine. Functionally, specifically methylates position 2 of adenine 2503 in 23S rRNA and position 2 of adenine 37 in tRNAs. m2A2503 modification seems to play a crucial role in the proofreading step occurring at the peptidyl transferase center and thus would serve to optimize ribosomal fidelity. In Francisella tularensis subsp. mediasiatica (strain FSC147), this protein is Dual-specificity RNA methyltransferase RlmN.